The sequence spans 283 residues: MSILPSFGFTQEQVACVCEVLQQGGNLERLGRFLWSLPACDHLHKNESVLKAKAVVAFHRGNFRELYKILESYQFSTHNHPKMQQLWLKAHYVEAEKLRGRPLGAVGKYRVRRKFPLPRTIWDGEETSYCFKEKSRSVLREWYTHNPYPSPREKRELAEATGLTTTQVSNWFKNRRQRDRAAEAKERENGENNGVGGKQSQRSPLDGVKSLMSSSEDEFSPPQSPEHSSVLLLQGTMNNPAAPAYPMPGLGAPHPLHGMQGHPHQIQDSLLGSLTSSLVDLGS.

The homeobox DNA-binding region spans 124 to 183 (GEETSYCFKEKSRSVLREWYTHNPYPSPREKRELAEATGLTTTQVSNWFKNRRQRDRAAE). The tract at residues 168–264 (VSNWFKNRRQ…PLHGMQGHPH (97 aa)) is disordered. A compositionally biased stretch (basic and acidic residues) spans 179-190 (DRAAEAKERENG). Positions 237–248 (MNNPAAPAYPMP) are enriched in low complexity.

Belongs to the SIX/Sine oculis homeobox family.

It localises to the nucleus. The protein resides in the cytoplasm. In terms of biological role, transcription factor that is involved in the regulation of cell proliferation, apoptosis and embryonic development. Depending on context, functions as a transcriptional repressor or activator. Plays an important role in the development of the inner ear, where it promotes hair cell proliferation and inhibits proliferation of neural progenitor cells. Required for normal myogenesis. Plays a role in the development of fast muscle fibers throughout the body, as well as the development of craniofacial muscles. The sequence is that of Homeobox protein six1a (six1a) from Danio rerio (Zebrafish).